The following is a 419-amino-acid chain: Protein farnesyltransferase subunit beta (419 aa).

PFTB repeat units follow at residues 68 to 109 (EDNT…ITLG), 119 to 160 (RNKL…SVLN), 167 to 208 (IKNV…ILIG), 215 to 256 (LPRL…ALLQ), and 329 to 371 (SIAL…SLCQ). Residues 193-196 (HGGY) and 235-238 (RTNK) each bind (2E,6E)-farnesyl diphosphate. 2 residues coordinate Zn(2+): D241 and C243. A (2E,6E)-farnesyl diphosphate-binding site is contributed by 244–247 (YSFW). H359 is a Zn(2+) binding site.

It belongs to the protein prenyltransferase subunit beta family. In terms of assembly, heterodimer of FTA and FTB. Zn(2+) is required as a cofactor.

The catalysed reaction is L-cysteinyl-[protein] + (2E,6E)-farnesyl diphosphate = S-(2E,6E)-farnesyl-L-cysteinyl-[protein] + diphosphate. In terms of biological role, catalyzes the transfer of a farnesyl moiety from farnesyl diphosphate to a cysteine at the fourth position from the C-terminus of several proteins. The beta subunit FTB is responsible for peptide-binding. This Pisum sativum (Garden pea) protein is Protein farnesyltransferase subunit beta (FTB).